Consider the following 220-residue polypeptide: Putative F-box protein At3g20705 (220 aa).

The region spanning 1 to 51 (MMMMSNLPNDLVEEILSRVTVTFMRTVRSICKKWNALTKDRSFTNKYIRNI) is the F-box domain.

In Arabidopsis thaliana (Mouse-ear cress), this protein is Putative F-box protein At3g20705.